We begin with the raw amino-acid sequence, 116 residues long: Large ribosomal subunit protein bL19 (116 aa).

This sequence belongs to the bacterial ribosomal protein bL19 family.

Functionally, this protein is located at the 30S-50S ribosomal subunit interface and may play a role in the structure and function of the aminoacyl-tRNA binding site. This chain is Large ribosomal subunit protein bL19, found in Ectopseudomonas mendocina (strain ymp) (Pseudomonas mendocina).